The sequence spans 432 residues: Asparagine--tRNA ligase (432 aa).

The protein belongs to the class-II aminoacyl-tRNA synthetase family. As to quaternary structure, homodimer.

It is found in the cytoplasm. It carries out the reaction tRNA(Asn) + L-asparagine + ATP = L-asparaginyl-tRNA(Asn) + AMP + diphosphate + H(+). This chain is Asparagine--tRNA ligase, found in Lactobacillus delbrueckii subsp. bulgaricus (strain ATCC 11842 / DSM 20081 / BCRC 10696 / JCM 1002 / NBRC 13953 / NCIMB 11778 / NCTC 12712 / WDCM 00102 / Lb 14).